The sequence spans 184 residues: Thylakoid membrane protein slr0575 (184 aa).

Transmembrane regions (helical) follow at residues 5-25 (ISLA…GFVA) and 31-51 (ATLN…GLAL).

The protein resides in the cellular thylakoid membrane. The sequence is that of Thylakoid membrane protein slr0575 from Synechocystis sp. (strain ATCC 27184 / PCC 6803 / Kazusa).